The chain runs to 151 residues: Large ribosomal subunit protein uL23m (151 aa).

Basic and acidic residues predominate over residues 120–143; the sequence is DDKKSLEDAKKNHKKFLDKNKDRP. The disordered stretch occupies residues 120–151; sequence DDKKSLEDAKKNHKKFLDKNKDRPGTPGWFSI.

It belongs to the universal ribosomal protein uL23 family. In terms of assembly, component of the mitochondrial ribosome large subunit (39S) which comprises a 16S rRNA and about 50 distinct proteins.

It localises to the mitochondrion. This Anopheles gambiae (African malaria mosquito) protein is Large ribosomal subunit protein uL23m (mRpL23).